Here is a 629-residue protein sequence, read N- to C-terminus: MSAEVRLRRLQQLVLDPGFLGLEPLLDLLLGVHQELGASELAQDKYVADFLQWAEPIVVRLKEVRLQRDDFEILKVIGRGAFSEVAVVKMKQTGQVYAMKIMNKWDMLKRGEVSCFREERDVLVNGDRRWITQLHFAFQDENYLYLVMEYYVGGDLLTLLSKFGERIPAEMARFYLAEIVMAIDSVHRLGYVHRDIKPDNILLDRCGHIRLADFGSCLKLRADGTVRSLVAVGTPDYLSPEILQAVGGGPGTGSYGPECDWWALGVFAYEMFYGQTPFYADSTAETYGKIVHYKEHLSLPLVDEGVPEEARDFIQRLLCPPETRLGRGGAGDFRTHPFFFGLDWDGLRDSVPPFTPDFEGATDTCNFDLVEDGLTAMVSGGGETLSDIREGAPLGVHLPFVGYSYSCMALRDSEVPGPTPMELEAEQLLEPHVQAPSLEPSVSPQDETAEVAVPAAVPAAEAEAEVTLRELQEALEEEVLTRQSLSREMEAIRTDNQNFASQLREAEARNRDLEAHVRQLQERMELLQAEGATAVTGVPSPRATDPPSHLDGPPAVAVGQCPLVGPGPMHRRHLLLPARVPRPGLSEALSLLLFAVVLSRAAALGCIGLVAHAGQLTAVWRRPGAARAP.

Residues 1–590 (MSAEVRLRRL…PRPGLSEALS (590 aa)) lie on the Cytoplasmic side of the membrane. A Protein kinase domain is found at 71–339 (FEILKVIGRG…AGDFRTHPFF (269 aa)). Residues 77-85 (IGRGAFSEV) and Lys-100 contribute to the ATP site. Asp-195 serves as the catalytic Proton acceptor. Residues Ser-216 and Ser-228 each carry the phosphoserine; by autocatalysis modification. Thr-234 bears the Phosphothreonine; by autocatalysis mark. Residues 340-415 (FGLDWDGLRD…SCMALRDSEV (76 aa)) form the AGC-kinase C-terminal domain. Positions 457–536 (VPAAEAEAEV…LQAEGATAVT (80 aa)) form a coiled coil. The helical; Anchor for type IV membrane protein transmembrane segment at 591–611 (LLLFAVVLSRAAALGCIGLVA) threads the bilayer. Topologically, residues 612–629 (HAGQLTAVWRRPGAARAP) are lumenal.

The protein belongs to the protein kinase superfamily. AGC Ser/Thr protein kinase family. DMPK subfamily. In terms of assembly, homodimer; homodimerization stimulates the kinase activity. Interacts with HSPB2; may enhance DMPK kinase activity. Interacts with PLN; phosphorylates PLN. May interact with RAC1; may regulate DMPK kinase activity. Interacts with LMNA; may regulate nuclear envelope stability. The cofactor is Mg(2+). Post-translationally, phosphorylated. Autophosphorylates. Phosphorylation by RAF1 may result in activation of DMPK. Proteolytic processing of the C-terminus may remove the transmembrane domain and release the kinase from membranes stimulating its activity. As to expression, most isoforms are expressed in many tissues including heart, skeletal muscle, liver and brain, except for isoform 2 which is only found in the heart and skeletal muscle, and isoform 14 which is only found in the brain, with high levels in the striatum, cerebellar cortex and pons.

Its subcellular location is the endoplasmic reticulum membrane. The protein localises to the nucleus outer membrane. It is found in the mitochondrion outer membrane. It localises to the sarcoplasmic reticulum membrane. The protein resides in the cell membrane. Its subcellular location is the cytoplasm. The protein localises to the cytosol. It is found in the mitochondrion membrane. It carries out the reaction L-seryl-[protein] + ATP = O-phospho-L-seryl-[protein] + ADP + H(+). The catalysed reaction is L-threonyl-[protein] + ATP = O-phospho-L-threonyl-[protein] + ADP + H(+). Coiled-coil-mediated oligomerization enhances the catalytic activity. Proteolytic processing of the C-terminus may release the protein from membranes and constitute a mean to regulate the enzyme. May be regulated by HSPB2, RAC1, RAF1 and G-protein second messengers. Functionally, non-receptor serine/threonine protein kinase which is necessary for the maintenance of skeletal muscle structure and function. May play a role in myocyte differentiation and survival by regulating the integrity of the nuclear envelope and the expression of muscle-specific genes. May also phosphorylate PPP1R12A and inhibit the myosin phosphatase activity to regulate myosin phosphorylation. Also critical to the modulation of cardiac contractility and to the maintenance of proper cardiac conduction activity probably through the regulation of cellular calcium homeostasis. Phosphorylates PLN, a regulator of calcium pumps and may regulate sarcoplasmic reticulum calcium uptake in myocytes. May also phosphorylate FXYD1/PLM which is able to induce chloride currents. May also play a role in synaptic plasticity. In Homo sapiens (Human), this protein is Myotonin-protein kinase (DMPK).